We begin with the raw amino-acid sequence, 611 residues long: Leukotriene A-4 hydrolase (611 aa).

Residue K73 is modified to N6-acetyllysine. A peptide contacts are provided by residues 135-137 and 267-272; these read QCQ and PYGGME. Residue H296 participates in Zn(2+) binding. E297 serves as the catalytic Proton acceptor. Zn(2+) contacts are provided by H300 and E319. Position 337 is an N6-acetyllysine (K337). Residue Y384 is the Proton donor of the active site. K414 is subject to N6-acetyllysine. At S416 the chain carries Phosphoserine. Residue 564–566 coordinates a peptide; that stretch reads RMK. K573 carries the N6-acetyllysine modification.

Belongs to the peptidase M1 family. As to quaternary structure, monomer. Zn(2+) serves as cofactor. Phosphorylation at Ser-416 inhibits leukotriene-A4 hydrolase activity.

Its subcellular location is the cytoplasm. It carries out the reaction leukotriene A4 + H2O = leukotriene B4. The catalysed reaction is (5S,6S)-epoxy-(18R)-hydroxy-(7E,9E,11Z,14Z,16E)-eicosapentaenoate + H2O = resolvin E1. The enzyme catalyses (5S,6S)-epoxy-(18S)-hydroxy-(7E,9E,11Z,14Z,16E)-eicosapentaenoate + H2O = 18S-resolvin E1. It catalyses the reaction Release of the N-terminal residue from a tripeptide.. Its pathway is lipid metabolism; leukotriene B4 biosynthesis. Its activity is regulated as follows. Inhibited by bestatin. Inhibited by captopril. The epoxide hydrolase activity is restrained by suicide inactivation that involves binding of LTA4 to Tyr-379. 4-(4-benzylphenyl)thiazol-2-amine (ARM1) selectively inhibits the epoxide hydrolase activity. Its function is as follows. Bifunctional zinc metalloenzyme that comprises both epoxide hydrolase (EH) and aminopeptidase activities. Acts as an epoxide hydrolase to catalyze the conversion of LTA4 to the pro-inflammatory mediator leukotriene B4 (LTB4). Also has aminopeptidase activity, with high affinity for N-terminal arginines of various synthetic tripeptides. In addition to its pro-inflammatory EH activity, may also counteract inflammation by its aminopeptidase activity, which inactivates by cleavage another neutrophil attractant, the tripeptide Pro-Gly-Pro (PGP), a bioactive fragment of collagen generated by the action of matrix metalloproteinase-9 (MMP9) and prolylendopeptidase (PREPL). Involved also in the biosynthesis of resolvin E1 and 18S-resolvin E1 from eicosapentaenoic acid, two lipid mediators that show potent anti-inflammatory and pro-resolving actions. This is Leukotriene A-4 hydrolase (Lta4h) from Rattus norvegicus (Rat).